Here is a 98-residue protein sequence, read N- to C-terminus: PE family immunomodulator PE35 (98 aa).

The 90-residue stretch at 1–90 (MEKMSHDPIA…DVARTYSQID (90 aa)) folds into the PE domain.

Belongs to the mycobacterial PE family. As to quaternary structure, interacts with PPE68. PE35/PPE68 complex interacts with human TLR2.

The protein localises to the secreted. It localises to the cell surface. Plays a major role in RD1-associated pathogenesis, and may contribute to the establishment and maintenance of M.tuberculosis infection. Together with PPE68, stimulates the secretion of IL-10 and MCP-1 from human macrophages, via the interaction with human Toll-like receptor 2 (TLR2). In Mycobacterium tuberculosis (strain CDC 1551 / Oshkosh), this protein is PE family immunomodulator PE35 (PE35).